The sequence spans 137 residues: Large ribosomal subunit protein uL16 (137 aa).

The protein belongs to the universal ribosomal protein uL16 family. As to quaternary structure, part of the 50S ribosomal subunit.

Binds 23S rRNA and is also seen to make contacts with the A and possibly P site tRNAs. The sequence is that of Large ribosomal subunit protein uL16 from Rhizobium johnstonii (strain DSM 114642 / LMG 32736 / 3841) (Rhizobium leguminosarum bv. viciae).